Here is a 486-residue protein sequence, read N- to C-terminus: Glutamyl-tRNA(Gln) amidotransferase subunit A (486 aa).

Active-site charge relay system residues include Lys79 and Ser154. Ser178 acts as the Acyl-ester intermediate in catalysis.

Belongs to the amidase family. GatA subfamily. Heterotrimer of A, B and C subunits.

The enzyme catalyses L-glutamyl-tRNA(Gln) + L-glutamine + ATP + H2O = L-glutaminyl-tRNA(Gln) + L-glutamate + ADP + phosphate + H(+). Functionally, allows the formation of correctly charged Gln-tRNA(Gln) through the transamidation of misacylated Glu-tRNA(Gln) in organisms which lack glutaminyl-tRNA synthetase. The reaction takes place in the presence of glutamine and ATP through an activated gamma-phospho-Glu-tRNA(Gln). The chain is Glutamyl-tRNA(Gln) amidotransferase subunit A from Dehalococcoides mccartyi (strain CBDB1).